Here is a 329-residue protein sequence, read N- to C-terminus: Flotillin-like protein FloA (329 aa).

2 consecutive transmembrane segments (helical) span residues Ile5–Ile25 and Leu27–Gly47.

It belongs to the flotillin-like FloA family. In terms of assembly, homooligomerizes.

The protein localises to the cell membrane. It is found in the membrane raft. Functionally, found in functional membrane microdomains (FMM) that may be equivalent to eukaryotic membrane rafts. FMMs are highly dynamic and increase in number as cells age. Flotillins are thought to be important factors in membrane fluidity. This is Flotillin-like protein FloA from Thermoanaerobacter sp. (strain X514).